The sequence spans 428 residues: Serine--tRNA ligase (428 aa).

Position 235–237 (235–237 (TAE)) interacts with L-serine. Residue 266 to 268 (RSE) coordinates ATP. Glutamate 289 lines the L-serine pocket. Residue 353-356 (EISS) participates in ATP binding. Serine 389 is a binding site for L-serine.

Belongs to the class-II aminoacyl-tRNA synthetase family. Type-1 seryl-tRNA synthetase subfamily. As to quaternary structure, homodimer. The tRNA molecule binds across the dimer.

The protein localises to the cytoplasm. It carries out the reaction tRNA(Ser) + L-serine + ATP = L-seryl-tRNA(Ser) + AMP + diphosphate + H(+). The enzyme catalyses tRNA(Sec) + L-serine + ATP = L-seryl-tRNA(Sec) + AMP + diphosphate + H(+). It functions in the pathway aminoacyl-tRNA biosynthesis; selenocysteinyl-tRNA(Sec) biosynthesis; L-seryl-tRNA(Sec) from L-serine and tRNA(Sec): step 1/1. Functionally, catalyzes the attachment of serine to tRNA(Ser). Is also able to aminoacylate tRNA(Sec) with serine, to form the misacylated tRNA L-seryl-tRNA(Sec), which will be further converted into selenocysteinyl-tRNA(Sec). The chain is Serine--tRNA ligase from Shewanella baltica (strain OS155 / ATCC BAA-1091).